Reading from the N-terminus, the 150-residue chain is MKVIATNKKAFHDFEILERYEAGLVLQGSEVKAIRAGRVNLKDSFVKFVKGEPFVFGMHISYLDSANPHFRPDEKRPRKLLLHKKEIDKLIGKTSEKGYTIVPLKLYFNKKNIAKLEIGLAKGKTLHDKRESLKKKIMDREARAAMKEYR.

The protein belongs to the SmpB family.

It is found in the cytoplasm. Required for rescue of stalled ribosomes mediated by trans-translation. Binds to transfer-messenger RNA (tmRNA), required for stable association of tmRNA with ribosomes. tmRNA and SmpB together mimic tRNA shape, replacing the anticodon stem-loop with SmpB. tmRNA is encoded by the ssrA gene; the 2 termini fold to resemble tRNA(Ala) and it encodes a 'tag peptide', a short internal open reading frame. During trans-translation Ala-aminoacylated tmRNA acts like a tRNA, entering the A-site of stalled ribosomes, displacing the stalled mRNA. The ribosome then switches to translate the ORF on the tmRNA; the nascent peptide is terminated with the 'tag peptide' encoded by the tmRNA and targeted for degradation. The ribosome is freed to recommence translation, which seems to be the essential function of trans-translation. The polypeptide is SsrA-binding protein (Nitratiruptor sp. (strain SB155-2)).